Reading from the N-terminus, the 1088-residue chain is RNA-directed RNA polymerase (1088 aa).

The RdRp catalytic domain maps to 501-687; it reads LSYGDVTRFL…AKRYLAGGKI (187 aa).

Belongs to the reoviridae RNA-directed RNA polymerase family. In terms of assembly, interacts with VP3 (Potential). Interacts with VP2; this interaction activates VP1. Interacts with NSP5; this interaction is probably necessary for the formation of functional virus factories. Interacts with NSP2; this interaction is weak. Requires Mg(2+) as cofactor.

The protein localises to the virion. The catalysed reaction is RNA(n) + a ribonucleoside 5'-triphosphate = RNA(n+1) + diphosphate. Functionally, RNA-directed RNA polymerase that is involved in both transcription and genome replication. Together with VP3 capping enzyme, forms an enzyme complex positioned near the channels situated at each of the five-fold vertices of the core. Following infection, the outermost layer of the virus is lost, leaving a double-layered particle (DLP) made up of the core and VP6 shell. VP1 then catalyzes the transcription of fully conservative plus-strand genomic RNAs that are extruded through the DLP's channels into the cytoplasm where they function as mRNAs for translation of viral proteins. One copy of each of the viral (+)RNAs is also recruited during core assembly, together with newly synthesized polymerase complexes and VP2. The polymerase of these novo-formed particles catalyzes the synthesis of complementary minus-strands leading to dsRNA formation. To do so, the polymerase specifically recognizes and binds 4 bases 5'-UGUG-3' in the conserved 3'-sequence of plus-strand RNA templates. VP2 presumably activates the autoinhibited VP1-RNA complex to coordinate packaging and genome replication. Once dsRNA synthesis is complete, the polymerase switches to the transcriptional mode, thus providing secondary transcription. The sequence is that of RNA-directed RNA polymerase from Rotavirus A (strain RVA/Human/Japan/KU/1995/G1P1A[8]) (RV-A).